The chain runs to 43 residues: Potassium channel toxin gamma-KTx 4.11 (43 aa).

4 disulfides stabilise this stretch: C5-C23, C11-C34, C20-C39, and C24-C41.

This sequence belongs to the ergtoxin family. Gamma-KTx 4 subfamily. As to expression, expressed by the venom gland.

It is found in the secreted. In terms of biological role, reversibly blocks Kv11/ERG potassium channels. This Centruroides noxius (Mexican scorpion) protein is Potassium channel toxin gamma-KTx 4.11.